Reading from the N-terminus, the 920-residue chain is Isoleucine--tRNA ligase (920 aa).

The 'HIGH' region motif lies at 57–67 (PYANGDIHLGH). Glu-560 lines the L-isoleucyl-5'-AMP pocket. Residues 601–605 (KMSKS) carry the 'KMSKS' region motif. Residue Lys-604 coordinates ATP. Residues Cys-890, Cys-893, Cys-910, and Cys-913 each coordinate Zn(2+).

The protein belongs to the class-I aminoacyl-tRNA synthetase family. IleS type 1 subfamily. In terms of assembly, monomer. Requires Zn(2+) as cofactor.

The protein localises to the cytoplasm. It carries out the reaction tRNA(Ile) + L-isoleucine + ATP = L-isoleucyl-tRNA(Ile) + AMP + diphosphate. Its function is as follows. Catalyzes the attachment of isoleucine to tRNA(Ile). As IleRS can inadvertently accommodate and process structurally similar amino acids such as valine, to avoid such errors it has two additional distinct tRNA(Ile)-dependent editing activities. One activity is designated as 'pretransfer' editing and involves the hydrolysis of activated Val-AMP. The other activity is designated 'posttransfer' editing and involves deacylation of mischarged Val-tRNA(Ile). The protein is Isoleucine--tRNA ligase of Caldicellulosiruptor bescii (strain ATCC BAA-1888 / DSM 6725 / KCTC 15123 / Z-1320) (Anaerocellum thermophilum).